The chain runs to 208 residues: Large ribosomal subunit protein uL4 (208 aa).

The interval 44 to 85 (RQGTKKTKTRAEVRGGGKKPWRQKGTGRARQGSIRAPHWRGG) is disordered. A compositionally biased stretch (basic residues) spans 59-70 (GGKKPWRQKGTG).

It belongs to the universal ribosomal protein uL4 family. As to quaternary structure, part of the 50S ribosomal subunit.

One of the primary rRNA binding proteins, this protein initially binds near the 5'-end of the 23S rRNA. It is important during the early stages of 50S assembly. It makes multiple contacts with different domains of the 23S rRNA in the assembled 50S subunit and ribosome. Functionally, forms part of the polypeptide exit tunnel. The sequence is that of Large ribosomal subunit protein uL4 from Mesoplasma florum (strain ATCC 33453 / NBRC 100688 / NCTC 11704 / L1) (Acholeplasma florum).